Consider the following 378-residue polypeptide: Protein FAM185A (378 aa).

The polypeptide is Protein FAM185A (Fam185a) (Mus musculus (Mouse)).